A 1384-amino-acid chain; its full sequence is Sterol 3-beta-glucosyltransferase (1384 aa).

Disordered regions lie at residues Met-1–Leu-64, Ala-86–Ala-189, and Asp-204–Ala-229. Over residues Leu-7–Leu-19 the composition is skewed to basic and acidic residues. Over residues Ala-21–Phe-36 the composition is skewed to low complexity. Positions Asp-38–Gln-47 are enriched in basic and acidic residues. Over residues Leu-146–Ser-156 the composition is skewed to low complexity. Polar residues predominate over residues Gly-158 to Glu-172. Positions Ser-174–Ala-189 are enriched in low complexity. Polar residues predominate over residues Ala-209 to Ala-229. The GRAM 1 domain maps to Lys-237 to Ala-284. The PH domain occupies Val-285–Phe-384. 2 disordered regions span residues Met-457–Asp-526 and Asn-560–Ser-629. 3 stretches are compositionally biased toward polar residues: residues Lys-458–Ala-473, Trp-483–Gly-494, and Asn-560–Thr-572. Basic and acidic residues predominate over residues Pro-578–Ser-588. Over residues Arg-604–Ser-629 the composition is skewed to polar residues. In terms of domain architecture, GRAM 2 spans Arg-714 to Gln-817. Residues Ser-901, Arg-902, Asp-904, Ala-1204, His-1206, His-1219, Gly-1223, Thr-1224, Asp-1243, and Gln-1244 each contribute to the UDP-alpha-D-glucose site. Positions Val-1322–Thr-1336 are enriched in polar residues. A disordered region spans residues Val-1322–Trp-1350. Acidic residues predominate over residues Glu-1338–Trp-1350.

It belongs to the glycosyltransferase 28 family.

Its subcellular location is the cytoplasm. It localises to the preautophagosomal structure membrane. It carries out the reaction a sterol + UDP-alpha-D-glucose = a sterol 3-beta-D-glucoside + UDP + H(+). The catalysed reaction is ergosterol + UDP-alpha-D-glucose = ergosteryl 3-beta-D-glucoside + UDP + H(+). Functionally, sterol glycosyltransferase responsible for the glycosylation of ergosterol to form ergosterol-glucoside. Involved in cytoplasm to vacuole transport (Cvt), pexophagy or nonselective autophagy. The protein is Sterol 3-beta-glucosyltransferase of Aspergillus oryzae (strain ATCC 42149 / RIB 40) (Yellow koji mold).